The primary structure comprises 34 residues: MSDIN-like toxin proprotein 4 (34 aa).

A propeptide spanning residues 1–10 is cleaved from the precursor; the sequence is MSDINATRLP. A cross-link (cyclopeptide (Val-Pro)) is located at residues 11–17; the sequence is VWIGYSP. A propeptide spanning residues 18 to 34 is cleaved from the precursor; sequence CVGDDCIALLTRGEGLC.

It belongs to the MSDIN fungal toxin family. In terms of processing, processed by the macrocyclase-peptidase enzyme POPB to yield a toxic cyclic heptapeptide. POPB first removes 10 residues from the N-terminus. Conformational trapping of the remaining peptide forces the enzyme to release this intermediate rather than proceed to macrocyclization. The enzyme rebinds the remaining peptide in a different conformation and catalyzes macrocyclization of the N-terminal 7 residues. In terms of tissue distribution, expressed in basidiocarps.

Functionally, probable toxin that belongs to the MSDIN-like toxin family responsible for a large number of food poisoning cases and deaths. The polypeptide is MSDIN-like toxin proprotein 4 (Amanita exitialis (Guangzhou destroying angel)).